Reading from the N-terminus, the 236-residue chain is UPF0257 lipoprotein YnfC (236 aa).

The signal sequence occupies residues 1–16 (MKKPLLLTLLCMILAG). Cysteine 17 carries N-palmitoyl cysteine lipidation. Cysteine 17 carries the S-diacylglycerol cysteine lipid modification.

Belongs to the UPF0257 family.

It is found in the cell membrane. The protein is UPF0257 lipoprotein YnfC of Salmonella typhi.